Here is a 199-residue protein sequence, read N- to C-terminus: uncharacterized protein (199 aa).

Transmembrane regions (helical) follow at residues 1-21 (MEQFYYYWSMWFLWVLTTFIF), 28-48 (IAVSVFILTNIILSIHDIALY), 51-71 (LNAAYLMFFVCGCVYAGYLGM), 83-103 (LVAAYAFVYLFALYDPVWFII), 127-147 (QLVLFVLGMCQGELVYSFVIQ), and 154-174 (AVGGFQWLNACSAGMILLFGI).

It is found in the cell membrane. This is an uncharacterized protein from Bacillus subtilis (strain 168).